Consider the following 593-residue polypeptide: Tyrosine-protein phosphatase non-receptor type 11 (593 aa).

SH2 domains are found at residues 6–102 and 112–216; these read WFHP…KYPL and WFHG…KQPL. The region spanning 247–521 is the Tyrosine-protein phosphatase domain; it reads FWEEFETLQQ…RFIYMAVQHY (275 aa). Substrate-binding positions include aspartate 425, 459 to 465, and glutamine 506; that span reads CSAGIGR. Cysteine 459 functions as the Phosphocysteine intermediate in the catalytic mechanism. Residues 548–557 show a composition bias toward polar residues; that stretch reads SLSDQTSGDQ. Residues 548 to 575 are disordered; sequence SLSDQTSGDQSPLPPCTPTPTCPEMRED. Positions 559-568 are enriched in pro residues; the sequence is PLPPCTPTPT.

This sequence belongs to the protein-tyrosine phosphatase family. Non-receptor class 2 subfamily. Phosphorylated by tyrosine-protein kinases. In terms of tissue distribution, expressed in embryonic fibroblast, hematopoietic, erythroid, myeloid and lymphoid cells.

It localises to the cytoplasm. It catalyses the reaction O-phospho-L-tyrosyl-[protein] + H2O = L-tyrosyl-[protein] + phosphate. This PTPase activity may directly link growth factor receptors and other signaling proteins through protein-tyrosine phosphorylation. The SH2 regions may interact with other cellular components to modulate its own phosphatase activity against interacting substrates. May play a positive role during the stages of erythroid cell proliferation. In Gallus gallus (Chicken), this protein is Tyrosine-protein phosphatase non-receptor type 11 (PTPN11).